The following is a 404-amino-acid chain: DNA replication and repair protein RecF (404 aa).

30 to 37 provides a ligand contact to ATP; the sequence is GSNGQGKT.

The protein belongs to the RecF family.

The protein localises to the cytoplasm. Its function is as follows. The RecF protein is involved in DNA metabolism; it is required for DNA replication and normal SOS inducibility. RecF binds preferentially to single-stranded, linear DNA. It also seems to bind ATP. The polypeptide is DNA replication and repair protein RecF (Clavibacter michiganensis subsp. michiganensis (strain NCPPB 382)).